The chain runs to 640 residues: Threonine--tRNA ligase (640 aa).

The 61-residue stretch at methionine 1–threonine 61 folds into the TGS domain. Positions aspartate 242–proline 533 are catalytic. Residues cysteine 333, histidine 384, and histidine 510 each coordinate Zn(2+).

The protein belongs to the class-II aminoacyl-tRNA synthetase family. As to quaternary structure, homodimer. It depends on Zn(2+) as a cofactor.

Its subcellular location is the cytoplasm. The catalysed reaction is tRNA(Thr) + L-threonine + ATP = L-threonyl-tRNA(Thr) + AMP + diphosphate + H(+). Its function is as follows. Catalyzes the attachment of threonine to tRNA(Thr) in a two-step reaction: L-threonine is first activated by ATP to form Thr-AMP and then transferred to the acceptor end of tRNA(Thr). Also edits incorrectly charged L-seryl-tRNA(Thr). The sequence is that of Threonine--tRNA ligase from Polynucleobacter necessarius subsp. necessarius (strain STIR1).